The following is a 468-amino-acid chain: Siroheme synthase 1 (468 aa).

The interval methionine 1–alanine 204 is precorrin-2 dehydrogenase /sirohydrochlorin ferrochelatase. NAD(+)-binding positions include glutamate 22–valine 23 and proline 43–alanine 44. At serine 128 the chain carries Phosphoserine. A uroporphyrinogen-III C-methyltransferase region spans residues glycine 216–alanine 468. Residue proline 225 coordinates S-adenosyl-L-methionine. Residue aspartate 248 is the Proton acceptor of the active site. The active-site Proton donor is the lysine 270. S-adenosyl-L-methionine contacts are provided by residues glycine 301–aspartate 303, isoleucine 306, threonine 331–alanine 332, methionine 383, and glycine 412.

The protein in the N-terminal section; belongs to the precorrin-2 dehydrogenase / sirohydrochlorin ferrochelatase family. This sequence in the C-terminal section; belongs to the precorrin methyltransferase family.

It catalyses the reaction uroporphyrinogen III + 2 S-adenosyl-L-methionine = precorrin-2 + 2 S-adenosyl-L-homocysteine + H(+). The enzyme catalyses precorrin-2 + NAD(+) = sirohydrochlorin + NADH + 2 H(+). The catalysed reaction is siroheme + 2 H(+) = sirohydrochlorin + Fe(2+). It participates in cofactor biosynthesis; adenosylcobalamin biosynthesis; precorrin-2 from uroporphyrinogen III: step 1/1. The protein operates within cofactor biosynthesis; adenosylcobalamin biosynthesis; sirohydrochlorin from precorrin-2: step 1/1. It functions in the pathway porphyrin-containing compound metabolism; siroheme biosynthesis; precorrin-2 from uroporphyrinogen III: step 1/1. Its pathway is porphyrin-containing compound metabolism; siroheme biosynthesis; siroheme from sirohydrochlorin: step 1/1. It participates in porphyrin-containing compound metabolism; siroheme biosynthesis; sirohydrochlorin from precorrin-2: step 1/1. Multifunctional enzyme that catalyzes the SAM-dependent methylations of uroporphyrinogen III at position C-2 and C-7 to form precorrin-2 via precorrin-1. Then it catalyzes the NAD-dependent ring dehydrogenation of precorrin-2 to yield sirohydrochlorin. Finally, it catalyzes the ferrochelation of sirohydrochlorin to yield siroheme. The chain is Siroheme synthase 1 from Aeromonas salmonicida (strain A449).